Here is a 325-residue protein sequence, read N- to C-terminus: Biotin synthase (325 aa).

The Radical SAM core domain occupies 49–267 (TQVQISTLLS…IAAARISMPR (219 aa)). The [4Fe-4S] cluster site is built by cysteine 64, cysteine 68, and cysteine 71. Cysteine 108, cysteine 139, cysteine 199, and arginine 271 together coordinate [2Fe-2S] cluster.

It belongs to the radical SAM superfamily. Biotin synthase family. In terms of assembly, homodimer. [4Fe-4S] cluster serves as cofactor. The cofactor is [2Fe-2S] cluster.

The catalysed reaction is (4R,5S)-dethiobiotin + (sulfur carrier)-SH + 2 reduced [2Fe-2S]-[ferredoxin] + 2 S-adenosyl-L-methionine = (sulfur carrier)-H + biotin + 2 5'-deoxyadenosine + 2 L-methionine + 2 oxidized [2Fe-2S]-[ferredoxin]. It participates in cofactor biosynthesis; biotin biosynthesis; biotin from 7,8-diaminononanoate: step 2/2. Catalyzes the conversion of dethiobiotin (DTB) to biotin by the insertion of a sulfur atom into dethiobiotin via a radical-based mechanism. This chain is Biotin synthase, found in Acidiphilium cryptum (strain JF-5).